The sequence spans 451 residues: UPF0210 protein LMOf2365_0563 (451 aa).

It belongs to the UPF0210 family. In terms of assembly, homodimer.

This chain is UPF0210 protein LMOf2365_0563, found in Listeria monocytogenes serotype 4b (strain F2365).